The chain runs to 598 residues: Elongation factor 4 (598 aa).

Residues Ser-4–Ser-186 form the tr-type G domain. GTP contacts are provided by residues Asp-16–Thr-21 and Asn-133–Asp-136.

Belongs to the TRAFAC class translation factor GTPase superfamily. Classic translation factor GTPase family. LepA subfamily.

It localises to the cell inner membrane. The catalysed reaction is GTP + H2O = GDP + phosphate + H(+). Its function is as follows. Required for accurate and efficient protein synthesis under certain stress conditions. May act as a fidelity factor of the translation reaction, by catalyzing a one-codon backward translocation of tRNAs on improperly translocated ribosomes. Back-translocation proceeds from a post-translocation (POST) complex to a pre-translocation (PRE) complex, thus giving elongation factor G a second chance to translocate the tRNAs correctly. Binds to ribosomes in a GTP-dependent manner. This chain is Elongation factor 4, found in Ehrlichia chaffeensis (strain ATCC CRL-10679 / Arkansas).